The following is a 518-amino-acid chain: Gypsy retrotransposon integrase-like protein 1 (518 aa).

Positions 135 to 293 (VVGNPWSVVT…PYFQMFNRNP (159 aa)) constitute an Integrase catalytic domain. Residues 326–348 (NQTPAAGQMESSTSEELSKSKVA) are disordered. Residue Ser-498 is modified to Phosphoserine.

In Rattus norvegicus (Rat), this protein is Gypsy retrotransposon integrase-like protein 1 (GIN1).